The sequence spans 282 residues: 4-diphosphocytidyl-2-C-methyl-D-erythritol kinase (282 aa).

Residue lysine 13 is part of the active site. 96 to 106 (PMGGGIGGGSS) contacts ATP. Aspartate 138 is a catalytic residue.

The protein belongs to the GHMP kinase family. IspE subfamily.

The catalysed reaction is 4-CDP-2-C-methyl-D-erythritol + ATP = 4-CDP-2-C-methyl-D-erythritol 2-phosphate + ADP + H(+). Its pathway is isoprenoid biosynthesis; isopentenyl diphosphate biosynthesis via DXP pathway; isopentenyl diphosphate from 1-deoxy-D-xylulose 5-phosphate: step 3/6. In terms of biological role, catalyzes the phosphorylation of the position 2 hydroxy group of 4-diphosphocytidyl-2C-methyl-D-erythritol. The protein is 4-diphosphocytidyl-2-C-methyl-D-erythritol kinase of Pseudomonas syringae pv. syringae (strain B728a).